The sequence spans 188 residues: uncharacterized protein (188 aa).

It is found in the plastid. It localises to the cyanelle. This is an uncharacterized protein from Cyanophora paradoxa.